The sequence spans 389 residues: Large envelope protein (389 aa).

At Met1 the chain carries N-acetylmethionine. Gly2 carries the N-myristoyl glycine; by host lipid modification. Residues 2 to 108 (GQNLSVTNPL…PPLRDTHPQA (107 aa)) are pre-S1. Residues 2-163 (GQNLSVTNPL…FLKTGDPALN (162 aa)) form a pre-S region. Over 2–170 (GQNLSVTNPL…ALNMESISSG (169 aa)) the chain is Virion surface; in external conformation. Over 2–242 (GQNLSVTNPL…PGYRWMCLRR (241 aa)) the chain is Intravirion; in internal conformation. Residues 78–105 (PAVPPPASTNRQSGRRPTPISPPLRDTH) form a disordered region. Positions 109-163 (MQWNSTVFHQALQDPRVRGLYFPAGGSSSGTVSPVPTTASPISSTFLKTGDPALN) are pre-S2. A helical transmembrane segment spans residues 171–191 (FLGPLLVLQAGFFLLTKILTI). Residues 192-242 (PQSLDSWWTSLNFLGGAPVCPGQNSQSLTSNHSPTSCPPICPGYRWMCLRR) are Intravirion; in external conformation-facing. A helical membrane pass occupies residues 243–263 (FIIFLFILLLCLIFLLVLLDY). The Virion surface segment spans residues 264-337 (RGMLPVCPLL…WASVRFSWLN (74 aa)). Asn309 carries an N-linked (GlcNAc...) asparagine; by host glycan. The helical transmembrane segment at 338 to 358 (LLVPFVQWFAGLSPTVWLSVI) threads the bilayer. Over 359–364 (WMIWYW) the chain is Intravirion. A helical membrane pass occupies residues 365-387 (GPSLYNILSPFIPLLPIFFCLWA). Residues 388-389 (YI) are Virion surface-facing.

This sequence belongs to the orthohepadnavirus major surface antigen family. In terms of assembly, in its internal form (Li-HBsAg), interacts with the capsid protein and with the isoform S. Interacts with host chaperone CANX. Associates with host chaperone CANX through its pre-S2 N glycan; this association may be essential for isoform M proper secretion. As to quaternary structure, interacts with isoform L. Interacts with the antigens of satellite virus HDV (HDVAgs); this interaction is required for encapsidation of HDV genomic RNA. Isoform M is N-terminally acetylated by host at a ratio of 90%, and N-glycosylated by host at the pre-S2 region. Post-translationally, myristoylated.

The protein resides in the virion membrane. The large envelope protein exists in two topological conformations, one which is termed 'external' or Le-HBsAg and the other 'internal' or Li-HBsAg. In its external conformation the protein attaches the virus to cell receptors and thereby initiating infection. This interaction determines the species specificity and liver tropism. This attachment induces virion internalization predominantly through caveolin-mediated endocytosis. The large envelope protein also assures fusion between virion membrane and endosomal membrane. In its internal conformation the protein plays a role in virion morphogenesis and mediates the contact with the nucleocapsid like a matrix protein. Its function is as follows. The middle envelope protein plays an important role in the budding of the virion. It is involved in the induction of budding in a nucleocapsid independent way. In this process the majority of envelope proteins bud to form subviral lipoprotein particles of 22 nm of diameter that do not contain a nucleocapsid. The sequence is that of Large envelope protein from Pongo pygmaeus (Bornean orangutan).